The primary structure comprises 253 residues: Bridging integrator 3 (253 aa).

Residues 9–232 (GQPKKQIVSK…LDQPGHSDEH (224 aa)) enclose the BAR domain. Coiled-coil stretches lie at residues 16–57 (VSKT…AMSK) and 120–151 (SLNMAVKRREQALQDYGRLQAKVEKYEEKEKT).

The protein resides in the cytoplasm. It localises to the cytoskeleton. Involved in cytokinesis and septation where it has a role in the localization of F-actin. In Rattus norvegicus (Rat), this protein is Bridging integrator 3 (Bin3).